The sequence spans 99 residues: Nucleoid-associated protein SPN23F10240 (99 aa).

The protein belongs to the YbaB/EbfC family. Homodimer.

The protein localises to the cytoplasm. It is found in the nucleoid. Functionally, binds to DNA and alters its conformation. May be involved in regulation of gene expression, nucleoid organization and DNA protection. The chain is Nucleoid-associated protein SPN23F10240 from Streptococcus pneumoniae (strain ATCC 700669 / Spain 23F-1).